The following is a 153-amino-acid chain: Large ribosomal subunit protein uL15 (153 aa).

Residues 21–41 form a disordered region; the sequence is RGIGSGKGKTGGRGIKGQKSR. Residues 23 to 35 are compositionally biased toward gly residues; that stretch reads IGSGKGKTGGRGI.

It belongs to the universal ribosomal protein uL15 family. In terms of assembly, part of the 50S ribosomal subunit.

Binds to the 23S rRNA. The sequence is that of Large ribosomal subunit protein uL15 from Rickettsia massiliae (strain Mtu5).